The primary structure comprises 294 residues: Large ribosomal subunit protein uL4m (294 aa).

Residues 120–139 are disordered; it reads VRGGGRKPWQQKGSGRARHG. Arg147 carries the post-translational modification Omega-N-methylarginine.

This sequence belongs to the universal ribosomal protein uL4 family. As to quaternary structure, component of the mitochondrial ribosome large subunit (39S) which comprises a 16S rRNA and about 50 distinct proteins. Interacts with MIEF1 upstream open reading frame protein.

It is found in the mitochondrion. The sequence is that of Large ribosomal subunit protein uL4m (MRPL4) from Bos taurus (Bovine).